Consider the following 213-residue polypeptide: Putative 3-methyladenine DNA glycosylase (213 aa).

Positions 165–187 (GTPVPPDQVRNGPRTGVSGDGGV) are disordered.

Belongs to the DNA glycosylase MPG family.

In Streptomyces avermitilis (strain ATCC 31267 / DSM 46492 / JCM 5070 / NBRC 14893 / NCIMB 12804 / NRRL 8165 / MA-4680), this protein is Putative 3-methyladenine DNA glycosylase.